Reading from the N-terminus, the 367-residue chain is Leu/Ile/Val-binding protein (367 aa).

An N-terminal signal peptide occupies residues 1–23 (MNIKGKALLAGCIALAFSNMALA). C76 and C101 are oxidised to a cystine.

Belongs to the leucine-binding protein family.

The protein resides in the periplasm. This protein is a component of the leucine, isoleucine, valine, (threonine) transport system, which is one of the two periplasmic binding protein-dependent transport systems of the high-affinity transport of the branched-chain amino acids. This chain is Leu/Ile/Val-binding protein (livJ), found in Escherichia coli O157:H7.